A 317-amino-acid polypeptide reads, in one-letter code: DNA-directed RNA polymerase subunit alpha 2 (317 aa).

The tract at residues 1 to 227 is alpha N-terminal domain (alpha-NTD); the sequence is MALENLLHPT…NQLRNIVDIE (227 aa). The segment at 241 to 317 is alpha C-terminal domain (alpha-CTD); the sequence is INPILLKHVE…TLIENWPQDL (77 aa).

It belongs to the RNA polymerase alpha chain family. Homodimer. The RNAP catalytic core consists of 2 alpha, 1 beta, 1 beta' and 1 omega subunit. When a sigma factor is associated with the core the holoenzyme is formed, which can initiate transcription.

It carries out the reaction RNA(n) + a ribonucleoside 5'-triphosphate = RNA(n+1) + diphosphate. Functionally, DNA-dependent RNA polymerase catalyzes the transcription of DNA into RNA using the four ribonucleoside triphosphates as substrates. This is DNA-directed RNA polymerase subunit alpha 2 from Francisella tularensis subsp. holarctica (strain FTNF002-00 / FTA).